A 297-amino-acid chain; its full sequence is Large ribosomal subunit protein uL18 (297 aa).

Residue Lys-164 forms a Glycyl lysine isopeptide (Lys-Gly) (interchain with G-Cter in ubiquitin) linkage. Residues Ser-167, Ser-176, and Ser-235 each carry the phosphoserine modification.

Belongs to the universal ribosomal protein uL18 family. In terms of assembly, component of the large ribosomal subunit (LSU). Mature yeast ribosomes consist of a small (40S) and a large (60S) subunit. The 40S small subunit contains 1 molecule of ribosomal RNA (18S rRNA) and 33 different proteins (encoded by 57 genes). The large 60S subunit contains 3 rRNA molecules (25S, 5.8S and 5S rRNA) and 46 different proteins (encoded by 81 genes). Component of a hexameric 5S RNP precursor complex, composed of 5S RNA, RRS1, RPF2, RPL5, RPL11A/RPL11B and SYO1; this complex acts as a precursor for ribosome assembly. RPL5/uL18 forms a heterotrimeric complex with SYO1 and RPL11A/RPL11B/uL5. Interaction of this complex with KAP104 allows the nuclear import of the heterotrimer.

The protein localises to the cytoplasm. It is found in the nucleus. Component of the ribosome, a large ribonucleoprotein complex responsible for the synthesis of proteins in the cell. The small ribosomal subunit (SSU) binds messenger RNAs (mRNAs) and translates the encoded message by selecting cognate aminoacyl-transfer RNA (tRNA) molecules. The large subunit (LSU) contains the ribosomal catalytic site termed the peptidyl transferase center (PTC), which catalyzes the formation of peptide bonds, thereby polymerizing the amino acids delivered by tRNAs into a polypeptide chain. The nascent polypeptides leave the ribosome through a tunnel in the LSU and interact with protein factors that function in enzymatic processing, targeting, and the membrane insertion of nascent chains at the exit of the ribosomal tunnel. This chain is Large ribosomal subunit protein uL18, found in Saccharomyces cerevisiae (strain ATCC 204508 / S288c) (Baker's yeast).